Reading from the N-terminus, the 205-residue chain is Probable GTP-binding protein EngB (205 aa).

The EngB-type G domain maps to 27–201; it reads TGIEIAFAGR…AVKLDFWFSP (175 aa). Residues 35 to 42, 62 to 66, 80 to 83, 147 to 150, and 180 to 182 contribute to the GTP site; these read GRSNAGKS, GRTQL, DLPG, TKAD, and FSA. Residues Ser-42 and Thr-64 each contribute to the Mg(2+) site.

The protein belongs to the TRAFAC class TrmE-Era-EngA-EngB-Septin-like GTPase superfamily. EngB GTPase family. Mg(2+) is required as a cofactor.

In terms of biological role, necessary for normal cell division and for the maintenance of normal septation. In Haemophilus influenzae (strain PittGG), this protein is Probable GTP-binding protein EngB.